Consider the following 956-residue polypeptide: Netrin receptor UNC5D (956 aa).

Residues Met1–Ala30 form the signal peptide. Residues Ala31–Asp382 lie on the Extracellular side of the membrane. The Ig-like domain occupies Pro52–Ser149. 9 disulfide bridges follow: Cys73/Cys134, Cys85/Cys132, Cys178/Cys229, Cys262/Cys299, Cys266/Cys303, Cys277/Cys289, Cys318/Cys352, Cys322/Cys357, and Cys330/Cys342. The interval Trp89–His91 is important for interaction with FLRT2. Residues Asn115 and Asn226 are each glycosylated (N-linked (GlcNAc...) asparagine). The region spanning Arg151 to Ser242 is the Ig-like C2-type domain. TSP type-1 domains are found at residues Asn250–Pro304 and Asp306–Ile358. N-linked (GlcNAc...) asparagine glycans are attached at residues Asn351 and Asn379. Residues Ile383–Val403 traverse the membrane as a helical segment. At Thr404–Leu956 the chain is on the cytoplasmic side. The region spanning Leu545 to Pro685 is the ZU5 domain. In terms of domain architecture, Death spans Gln862–Thr939.

Belongs to the unc-5 family. In terms of assembly, interacts (via extracellular domain) with FLRT2 and FLRT3 (via extracellular domain); the interaction is direct. Has higher affinity for FLRT2. Identified in a complex with FLRT3 and ADGRL3; does not interact with ADGRL3 by itself. In terms of processing, proteolytically cleaved by caspases during apoptosis. The cleavage does not take place when the receptor is associated with netrin ligand. Its cleavage by caspases is required to induce apoptosis. Detected in multipolar cells in the brain subventricular zone (at protein level). Detected in embryonic brain neocortex, especially in the subventricular zone. Detected in multipolar cells in the brain subventricular zone. Detected in brain neocortex from young pups, especially in the somatosensory cortex. Expressed in developing limb and mammary gland.

The protein localises to the cell membrane. In terms of biological role, receptor for the netrin NTN4 that promotes neuronal cell survival. Plays a role in cell-cell adhesion and cell guidance. Receptor for netrin involved in cell migration. Plays a role in the regulation of neuronal cell migration in the developing brain via its interaction with FLRT2. Plays a role in axon guidance by mediating axon repulsion of neuronal growth cones in the developing nervous system upon ligand binding. May play a role in apoptosis in response to DNA damage. It also acts as a dependence receptor required for apoptosis induction when not associated with netrin ligand. Mediates cell-cell adhesion via its interaction with FLRT3 on an adjacent cell. This Mus musculus (Mouse) protein is Netrin receptor UNC5D (Unc5d).